Here is a 284-residue protein sequence, read N- to C-terminus: tRNA uridine(34) hydroxylase (284 aa).

The region spanning 132–226 (AGRPVVMLDT…YFEEVGGAHY (95 aa)) is the Rhodanese domain. Residue Cys-186 is the Cysteine persulfide intermediate of the active site.

Belongs to the TrhO family.

It catalyses the reaction uridine(34) in tRNA + AH2 + O2 = 5-hydroxyuridine(34) in tRNA + A + H2O. Its function is as follows. Catalyzes oxygen-dependent 5-hydroxyuridine (ho5U) modification at position 34 in tRNAs. The protein is tRNA uridine(34) hydroxylase of Burkholderia ambifaria (strain MC40-6).